A 476-amino-acid polypeptide reads, in one-letter code: RNA-binding protein 45 (476 aa).

Residues 1–14 show a composition bias toward gly residues; sequence MDDAGGLGGSGGFR. Positions 1 to 20 are disordered; it reads MDDAGGLGGSGGFRPGVDSL. RRM domains are found at residues 26 to 106 and 121 to 192; these read SRIF…IAQS and TRIF…LAEP. Residue Lys-34 forms a Glycyl lysine isopeptide (Lys-Gly) (interchain with G-Cter in SUMO2) linkage. Positions 192–212 are disordered; sequence PKNKVSGSPEQDDYSSGRQEA. Residues 196-209 show a composition bias toward polar residues; it reads VSGSPEQDDYSSGR. Ser-199 and Ser-464 each carry phosphoserine. One can recognise an RRM 3 domain in the interval 392–464; it reads ERLFVVFNPH…VRLKVMLADS (73 aa).

Its subcellular location is the cytoplasm. It localises to the nucleus. Its function is as follows. RNA-binding protein with binding specificity for poly(C). May play an important role in neural development. The chain is RNA-binding protein 45 (Rbm45) from Mus musculus (Mouse).